The chain runs to 290 residues: Type II restriction enzyme MjaIII (290 aa).

This sequence belongs to the DpnII type II restriction endonuclease family.

It carries out the reaction Endonucleolytic cleavage of DNA to give specific double-stranded fragments with terminal 5'-phosphates.. A P subtype restriction enzyme that recognizes the double-stranded sequence 5'-GATC-3'; the cleavage site is unknown. In Methanocaldococcus jannaschii (strain ATCC 43067 / DSM 2661 / JAL-1 / JCM 10045 / NBRC 100440) (Methanococcus jannaschii), this protein is Type II restriction enzyme MjaIII (mjaIIIR).